Consider the following 320-residue polypeptide: Cytochrome f (320 aa).

The first 35 residues, 1–35, serve as a signal peptide directing secretion; that stretch reads MENRNTFSWVKEQITRSISVSIMIYVITRTSISNA. Positions 36, 56, 59, and 60 each coordinate heme. A helical membrane pass occupies residues 286–305; that stretch reads VQGLLFFFASVILAQVFLVL.

This sequence belongs to the cytochrome f family. The 4 large subunits of the cytochrome b6-f complex are cytochrome b6, subunit IV (17 kDa polypeptide, petD), cytochrome f and the Rieske protein, while the 4 small subunits are PetG, PetL, PetM and PetN. The complex functions as a dimer. Heme serves as cofactor.

It localises to the plastid. The protein localises to the chloroplast thylakoid membrane. Functionally, component of the cytochrome b6-f complex, which mediates electron transfer between photosystem II (PSII) and photosystem I (PSI), cyclic electron flow around PSI, and state transitions. This chain is Cytochrome f (petA), found in Triticum aestivum (Wheat).